We begin with the raw amino-acid sequence, 418 residues long: MLSPTNSTSKTAPVPPQDSSKPVLISEEPQNQLLQKVARTALVVLLVVVTLGLILLFYSFSDLQSFPWCCQTRPSTKEQPTISIPVPLPSPPLAVPRPSTPPPPVISRPSMPPAPTPAISPPSTPSAPKPSTPPPLPPKAPKPVKTQEDLLPFVPEQVFVEMYEDMARRRTIEALVPAWDSDIIFKCLCYFHTLYQGLIPLETFPPATIFNFKQKIISILEDKKAVLRGEPIKGSLPICCSEENYRRHLHGTTLLPVFMWYHPTPKTLSDTMQTMKQLAIKGSVGASHWLLVIVDIQARRLVYFDSLYNYVMSPEDMEKDLQSFAQQLDQVYPAYDSQKFSVKIAAKEVIQKGSGSSCGAWCCQFLHWYLRDPFTDALNDLPVDSVERHENLASFVQACEAAVQDLPELFWPEAKALF.

Residues Met1–Thr11 are compositionally biased toward polar residues. A disordered region spans residues Met1–Val23. A helical transmembrane segment spans residues Thr40–Phe60. The segment at Thr72–Lys145 is disordered. Residues Val86 to Pro141 are compositionally biased toward pro residues. Active-site residues include His288, Asp305, and Cys358.

Belongs to the peptidase C48 family.

The protein localises to the secreted. The protein resides in the host cell. It localises to the membrane. In terms of biological role, effector proteins function to alter host cell physiology and promote bacterial survival in host tissues. This protease possesses deubiquitinating and deneddylating activities. The protein is Deubiquitinase and deneddylase Dub1 (cdu1) of Chlamydia trachomatis serovar E (strain Sweden2).